A 191-amino-acid polypeptide reads, in one-letter code: Rho-related GTP-binding protein RhoG (191 aa).

Residue 10–17 (GDGAVGKT) participates in GTP binding. The Effector region signature appears at 32–40 (YIPTVFDNY). Residues 57 to 61 (DTAGQ) and 115 to 118 (TKKD) each bind GTP. Thr-138 and Thr-180 each carry phosphothreonine. The residue at position 188 (Cys-188) is a Cysteine methyl ester. The S-geranylgeranyl cysteine moiety is linked to residue Cys-188. Residues 189 to 191 (ILL) constitute a propeptide, removed in mature form.

It belongs to the small GTPase superfamily. Rho family. Interacts with ARHGEF26. Interacts with ARHGEF16. Interacts with UNC13D; the interaction increases RhoG affinity to the membrane lipids, targets UNC13D to membrane lipids and facilitates cytotoxic granule (CG) docking to the plasma membrane.

The protein localises to the cell membrane. Functionally, plays a role in immunological synaptic F-actin density and architecture organization. Regulates actin reorganization in lymphocytes, possibly through the modulation of Rac1 activity. Required for the formation of membrane ruffles during macropinocytosis. Plays a role in cell migration and is required for the formation of cup-like structures during trans-endothelial migration of leukocytes. Binds phospholipids in an activation-dependent manner; thereby acting as an anchor for other proteins to the plasma membrane (PM). Plays a role in exocytosis of cytotoxic granules (CG) by lymphocytes/Component of the exocytosis machinery in natural killer (NK) and CD8+ T cells. Promotes the docking of cytotoxic granules (CG) to the plasma membrane through the interaction with UNC13D. Involved in the cytotoxic activity of lymphocytes/primary CD8+ T cells. The sequence is that of Rho-related GTP-binding protein RhoG (RHOG) from Cricetus cricetus (Black-bellied hamster).